Reading from the N-terminus, the 260-residue chain is Isoprenyl transferase (260 aa).

The active site involves aspartate 38. Mg(2+) is bound at residue aspartate 38. Substrate is bound by residues 39-42 (GNGR), tryptophan 43, arginine 51, histidine 55, and 83-85 (STE). Catalysis depends on asparagine 86, which acts as the Proton acceptor. Residues tryptophan 87, arginine 89, arginine 206, and 212–214 (RLS) contribute to the substrate site. Residue glutamate 225 participates in Mg(2+) binding.

This sequence belongs to the UPP synthase family. As to quaternary structure, homodimer. Mg(2+) is required as a cofactor.

Functionally, catalyzes the condensation of isopentenyl diphosphate (IPP) with allylic pyrophosphates generating different type of terpenoids. In Heliobacterium mobile (Heliobacillus mobilis), this protein is Isoprenyl transferase.